A 266-amino-acid chain; its full sequence is Tryptophan synthase alpha chain (266 aa).

Active-site proton acceptor residues include Glu-45 and Asp-56.

It belongs to the TrpA family. Tetramer of two alpha and two beta chains.

It catalyses the reaction (1S,2R)-1-C-(indol-3-yl)glycerol 3-phosphate + L-serine = D-glyceraldehyde 3-phosphate + L-tryptophan + H2O. Its pathway is amino-acid biosynthesis; L-tryptophan biosynthesis; L-tryptophan from chorismate: step 5/5. Its function is as follows. The alpha subunit is responsible for the aldol cleavage of indoleglycerol phosphate to indole and glyceraldehyde 3-phosphate. The protein is Tryptophan synthase alpha chain of Novosphingobium aromaticivorans (strain ATCC 700278 / DSM 12444 / CCUG 56034 / CIP 105152 / NBRC 16084 / F199).